Consider the following 528-residue polypeptide: MEATLPVCKSVTSTPGLFMGKTSGIRSSQCSFMMGNKVNFPRQRAQTAHVHCAKNGGALGVTCRAEKILVANRGEIAVRVIRTAHEMGIPCVAVYSTIDKDALHVKLADESVCIGEAPSSQSYLVIPNVLSAAISRRCTMLHPGYGFLAENAVFVEMCREHGINFIGPNPDSIRVMGDKSTARETMKKAGVPTVPGSDGLLQSTEEGVRLANEIGYPVMIKATAGGGGRGMRLAKEPDEFVKLLQQAKSEAAAAFGNDGVYLEKYVQNPRHIEFQVLADKFGNVVHFGERDCSIQRRNQKLLEEAPSPALTPELRKAMGDAAVSAAASIGYIGVGTVEFLLDERGSFYFMEMNTRIQVEHPVTEMISSVDLIEEQIRVAMGEKLRYKQEDIVLRGHSIECRINAEDAFKGFRPGPGRITAYLPSGGPFVRMDSHVYPDYVVPPSYDSLLGKLIVWAPTREKAIERMKRALDDTIITGVPTTIDYHKLILEIEDFKNGNVDTAFIPKHEKELAAPQQIIPAKQLTNSAA.

Residues methionine 1–histidine 51 constitute a chloroplast transit peptide. Residues lysine 179, lysine 221, glycine 227–glycine 228, glutamate 263–valine 266, and histidine 271 contribute to the ATP site. Positions arginine 183 to methionine 380 constitute an ATP-grasp domain. Lysine 300 provides a ligand contact to hydrogencarbonate. ATP contacts are provided by glutamate 338 and glutamate 351. Residues glutamate 338, glutamate 351, and asparagine 353 each coordinate Mg(2+). 3 residues coordinate Mn(2+): glutamate 338, glutamate 351, and asparagine 353. Arginine 355, valine 358, and arginine 401 together coordinate hydrogencarbonate. Arginine 355 is an active-site residue. Residue arginine 401 participates in biotin binding.

As to quaternary structure, acetyl-CoA carboxylase is a heterohexamer composed of biotin carboxyl carrier protein, biotin carboxylase and two subunits each of ACCase subunit alpha and ACCase plastid-coded subunit beta (accD). Mg(2+) serves as cofactor. The cofactor is Mn(2+).

It localises to the plastid. The protein localises to the chloroplast. The enzyme catalyses N(6)-biotinyl-L-lysyl-[protein] + hydrogencarbonate + ATP = N(6)-carboxybiotinyl-L-lysyl-[protein] + ADP + phosphate + H(+). It participates in lipid metabolism; malonyl-CoA biosynthesis; malonyl-CoA from acetyl-CoA: step 1/1. Its function is as follows. This protein is a component of the acetyl coenzyme A carboxylase complex; first, biotin carboxylase catalyzes the carboxylation of the carrier protein and then the transcarboxylase transfers the carboxyl group to form malonyl-CoA. The polypeptide is Biotin carboxylase 1, chloroplastic (Populus trichocarpa (Western balsam poplar)).